A 106-amino-acid chain; its full sequence is NADH dehydrogenase [ubiquinone] 1 beta subcomplex subunit 9 (106 aa).

This sequence belongs to the complex I LYR family. As to quaternary structure, complex I is composed of about 45 different subunits.

The protein localises to the mitochondrion inner membrane. Accessory subunit of the mitochondrial membrane respiratory chain NADH dehydrogenase (Complex I), that is believed to be not involved in catalysis. Complex I functions in the transfer of electrons from NADH to the respiratory chain. The immediate electron acceptor for the enzyme is believed to be ubiquinone. In Dictyostelium discoideum (Social amoeba), this protein is NADH dehydrogenase [ubiquinone] 1 beta subcomplex subunit 9 (ndufb9).